Reading from the N-terminus, the 461-residue chain is Flavin-containing monooxygenase FMO GS-OX-like 8 (461 aa).

Position 20 to 25 (20 to 25) interacts with FAD; the sequence is GAGPSG. An NADP(+)-binding site is contributed by 220-225; sequence GCSMSG.

This sequence belongs to the FMO family. Interacts with EER5. FAD serves as cofactor.

Its function is as follows. Catalyzes the conversion of methylthioalkyl glucosinolates of any chain length into methylsulfinylalkyl glucosinolates. The protein is Flavin-containing monooxygenase FMO GS-OX-like 8 of Arabidopsis thaliana (Mouse-ear cress).